Reading from the N-terminus, the 561-residue chain is MAEAVWSTDTGEAVYRSRDPVRNLRLRVHLQRITSSNFLHYQPAAQMGKDLIDLATFKPPQAASGHRPDEEEEEEVIIGWQEKLFSQFEVDLYQNESACQSPLDHQYRQEVLKLENSGGRKNRRIFTYTDSDRYTDLEEYCQKITTSAGEAPSFLVERMANVRRRRQDRRGVEGSKLKSRIITWEPSEDFIRNSHAINTPLQTMYIMADLGPYGKLGYKIHEHVLCVLKVDSNGVITVKPDFTGIKGPYRIETEGEKQEHTSAWKYTIDNVSSLAQPEEEEREQRVFKDLYGRHKEYLSSLVGTDFEMIAPGALRLFVNGEVVSARGYEHDNLYVHFFVELPATNWSSPSFQQLSGVTQTCVTRSLGMDKVAYFSFPFTFEAFFLHEDESDESLPEWPVLYCKVLSLDFWQRYRVEGYGAVVLPVTPGSHTLTASTWRPMELGLVAELRRFFIGGSLELEDPSYVRIPGTFKGERLSRFGFRTETTGTVTFRLHCLQQSRAFMESNSLRKQMRSVLDRLEGFSQQSSTHNVLEAFRRARRRMQEARESLPQDLVSPTGTLA.

The C2 B9-type domain maps to 314–442 (LRLFVNGEVV…TASTWRPMEL (129 aa)).

In terms of assembly, part of the tectonic-like complex (also named B9 complex). Interacts with TMEM107. Interacts with TCTN3, AHI1, TCTN1, TCTN2, CC2D2A. Interacts with FLNA. Interacts with TMEM67. Interacts with B9D1 and B9D2.

It localises to the cytoplasm. It is found in the cytoskeleton. The protein localises to the cilium basal body. Its subcellular location is the microtubule organizing center. The protein resides in the centrosome. In terms of biological role, component of the tectonic-like complex, a complex localized at the transition zone of primary cilia and acting as a barrier that prevents diffusion of transmembrane proteins between the cilia and plasma membranes. Involved in centrosome migration to the apical cell surface during early ciliogenesis. Required for ciliary structure and function, including a role in regulating length and appropriate number through modulating centrosome duplication. Required for cell branching morphology. This Rattus norvegicus (Rat) protein is Tectonic-like complex member MKS1 (Mks1).